The sequence spans 436 residues: MGQVLPLVTRQGDRIAIVSGLRTPFARQATAFHGIPAVDLGKMVVGELLARSEIPAEVIEQLVFGQVVQMPEAPNIAREIVLGTGMNVHTDAYSVSRACATSFQAVANVAESLMAGTIRAGIAGGADSSSVLPIGVSKKLARVLVDVNKARTMSQRLKLFSRLRLRDLMPVPPAVAEYSTGLRMGDTAEQMAKTYGITREQQDALAHRSHQRAAQAWSDGKLKEEVMTAFIPPYKQPFVEDNNIRGNSSLADYAKLRPAFDRKHGTVTAANSTPLTDGAAAVILMTESRAKELGLVPLGYLRSYAFTAIDVWQDMLLGPAWSTPLALERAGLTMSDLTLIDMHEAFAAQTLANIQLLGSERFAREVLGRAHATGEVDDSKFNVLGGSIAYGHPFAATGARMITQTLHELRRRGGGFGLVTACAAGGLGAAMVLEAE.

Cysteine 99 (acyl-thioester intermediate) is an active-site residue. Residues histidine 392 and cysteine 422 each act as proton acceptor in the active site.

This sequence belongs to the thiolase-like superfamily. Thiolase family. As to quaternary structure, heterotetramer of two alpha chains (FadJ) and two beta chains (FadI).

Its subcellular location is the cytoplasm. It catalyses the reaction an acyl-CoA + acetyl-CoA = a 3-oxoacyl-CoA + CoA. It participates in lipid metabolism; fatty acid beta-oxidation. Functionally, catalyzes the final step of fatty acid oxidation in which acetyl-CoA is released and the CoA ester of a fatty acid two carbons shorter is formed. In Escherichia coli (strain ATCC 8739 / DSM 1576 / NBRC 3972 / NCIMB 8545 / WDCM 00012 / Crooks), this protein is 3-ketoacyl-CoA thiolase.